A 395-amino-acid polypeptide reads, in one-letter code: Bone morphogenetic protein 2 (395 aa).

Residues 1-23 (MVAGTRCLLALLLPQVLLGGAAG) form the signal peptide. Positions 24–281 (LIPELGRRKF…GHPLHRREKR (258 aa)) are cleaved as a propeptide — cleaved by PCSK5. Serine 86 carries the post-translational modification Phosphoserine. N-linked (GlcNAc...) asparagine glycans are attached at residues asparagine 134 and asparagine 199. Residues 270–292 (GKGHPLHRREKRQAKHKQRKRLK) form a disordered region. Residues 273–292 (HPLHRREKRQAKHKQRKRLK) are compositionally biased toward basic residues. 3 disulfides stabilise this stretch: cysteine 295–cysteine 360, cysteine 324–cysteine 392, and cysteine 328–cysteine 394. Asparagine 337 is a glycosylation site (N-linked (GlcNAc...) asparagine).

It belongs to the TGF-beta family. In terms of assembly, homodimer; disulfide-linked. Interacts with SOSTDC1. Interacts with GREM2, RGMA, RGMB and RGMC. Interacts with ASPN. Interacts with MAFP5. Interacts with FBN1 (via N-terminal domain) and FBN2. Interacts with type I receptor BMPR1A. Interacts with type II receptor BMPR2. Interacts with SCUBE3. Interacts with TNFAIP6 (primarily via Link domain); this interaction is inhibited by hyaluronan. Interacts with ERFE. Interacts with BMPR1A/ALK3; the interaction may induce HAMP expression. Forms heterodimers with BMP6 in vitro; the heterodimer then binds to its receptor BMPR1A /ALK3 and may induce HAMP expression. Interacts with TGFBR3.

The protein resides in the secreted. Growth factor of the TGF-beta superfamily that plays essential roles in many developmental processes, including cardiogenesis, neurogenesis, and osteogenesis. Induces cartilage and bone formation. Initiates the canonical BMP signaling cascade by associating with type I receptor BMPR1A and type II receptor BMPR2. Once all three components are bound together in a complex at the cell surface, BMPR2 phosphorylates and activates BMPR1A. In turn, BMPR1A propagates signal by phosphorylating SMAD1/5/8 that travel to the nucleus and act as activators and repressors of transcription of target genes. Also acts to promote expression of HAMP, via the interaction with its receptor BMPR1A/ALK3. Can also signal through non-canonical pathways such as ERK/MAP kinase signaling cascade that regulates osteoblast differentiation. Also stimulates the differentiation of myoblasts into osteoblasts via the EIF2AK3-EIF2A-ATF4 pathway by stimulating EIF2A phosphorylation which leads to increased expression of ATF4 which plays a central role in osteoblast differentiation. Acts as a positive regulator of odontoblast differentiation during mesenchymal tooth germ formation, expression is repressed during the bell stage by MSX1-mediated inhibition of CTNNB1 signaling. The chain is Bone morphogenetic protein 2 (BMP2) from Oryctolagus cuniculus (Rabbit).